The chain runs to 246 residues: 2-C-methyl-D-erythritol 4-phosphate cytidylyltransferase (246 aa).

Belongs to the IspD/TarI cytidylyltransferase family. IspD subfamily.

The catalysed reaction is 2-C-methyl-D-erythritol 4-phosphate + CTP + H(+) = 4-CDP-2-C-methyl-D-erythritol + diphosphate. Its pathway is isoprenoid biosynthesis; isopentenyl diphosphate biosynthesis via DXP pathway; isopentenyl diphosphate from 1-deoxy-D-xylulose 5-phosphate: step 2/6. In terms of biological role, catalyzes the formation of 4-diphosphocytidyl-2-C-methyl-D-erythritol from CTP and 2-C-methyl-D-erythritol 4-phosphate (MEP). This Clostridium tetani (strain Massachusetts / E88) protein is 2-C-methyl-D-erythritol 4-phosphate cytidylyltransferase.